Reading from the N-terminus, the 50-residue chain is Thrombin-like enzyme BpirSP41 (50 aa).

The Peptidase S1 domain occupies 1-50 (VVGGDECDINEHPFLAFLYSHGYFCGLTLINQEWVLTAAHCDRRFMRIYL). Cysteine 25 and cysteine 41 form a disulfide bridge. Histidine 40 functions as the Charge relay system in the catalytic mechanism.

Belongs to the peptidase S1 family. Snake venom subfamily. Monomer. In terms of processing, N-glycosylated. In terms of tissue distribution, expressed by the venom gland.

Its subcellular location is the secreted. Its activity is regulated as follows. Inhibited by serine protease inhibitors PMSF, benzamidine, leupeptin and aprotinin, as well as by copper ions (Cu2+). Not inhibited by metalloprotease inhibitors EDTA, EGTA and 1,10-phenanthroline, as well as by barium (Ba2+) and calcium ion (Ca2+). Functionally, snake venom serine protease that interferes with the hemostatic system of the prey. It almost completely degrades both Aalpha (FGA) and Bbeta (FGB) chains of fibrinogen. It presents a higher ability to degrade fibrin clots than BpirSP27. It hydrolyzes chromogenic substrates S-2238 (used for testing thrombin activity), S-2222 (factor Xa), S-2266 (glandular kallikrein and factor XIa), and S-2302 (plasma kallikrein, factor XIa and XIIa). It shows a decrease in the clotting time of human plasma in the presence of increasing doses of the enzyme. Its minimum coagulant dose (MCD) is 20 ug. It promotes platelet aggregation with a maximum of aggregation of 20%, regardless of the concentration increase or the presence of calcium. It also shows 40% inhibition of the hemolytic activity promoted by the complement pathways and possess only a minor role in the induction of edema and pain in rat. In Bothrops pirajai (Piraja's lancehead), this protein is Thrombin-like enzyme BpirSP41.